Here is a 319-residue protein sequence, read N- to C-terminus: Polyprenyl transferase macG (319 aa).

The next 9 helical transmembrane spans lie at 28–45 (AWLCWYPAIWGACVAAGM), 48–68 (VSLELAPFLRLLFGIWASVTA), 106–126 (AVVAFICWLPVTLAITWGTLG), 127–147 (PAVMAGFIPVWVLSTIYPFMK), 152–172 (FPQVVLGAIIGGAVFPGWVGI), 182–202 (ALPLFFATASWVVYFDVFYAT), 224–244 (VQILLAVLGALQVLLFAVTAL), 249–269 (SLIFWVLGLGVWMVNVPWHIL), and 289–309 (LGLYLTGVSLLELFVVRVYDI).

The protein belongs to the UbiA prenyltransferase family. Mg(2+) serves as cofactor.

It is found in the membrane. It functions in the pathway secondary metabolite biosynthesis; terpenoid biosynthesis. In terms of biological role, polyprenyl transferase; part of the gene cluster that mediates the biosynthesis of macrophorins, isoprenoid epoxycyclohexenones containing cyclized drimane moieties. The first step of the pathway is the synthesis of 6-methylsalicylic acid (6-MSA) by the polyketide synthase macA. 6-MSA is then converted to m-cresol by the decarboxylase macB. The cytochrome P450 monooxygenase macC then catalyzes the oxidation of m-cresol to toluquinol. Epoxidation of toluquinol is then performed by the short chain dehydrogenase macD, with the help of macE, and a further prenylation by macG leads to 7-deacetoxyyanuthone A. The next step is the hydroxylation of C-22 of 7-deacetoxyyanuthone A by the cytochrome P450 monooxygenase macH to yield 22-deacetylyanuthone A. O-Mevalon transferase macI then attaches mevalon to the hydroxyl group of 22-deacetylyanuthone A to produce yanuthone E. The terpene cyclase macJ catalyzes the cyclization of 22-deacetylyanuthone A to macrophorin A. MacJ is also able to catalyze cyclization of yanuthone E and 7-deacetoxyyanuthone A to their corresponding macrophorins. The macJ products can be further modified by macH and macJ, as well as by the FAD-dependent monooxygenase macF, to produce additional macrophorins, including 4'-oxomacrophorin A, 4'-oxomacrophorin D and 4'-oxomacrophorin E. In Penicillium terrestre, this protein is Polyprenyl transferase macG.